The sequence spans 146 residues: Transcription antitermination protein NusB (146 aa).

It belongs to the NusB family.

Its function is as follows. Involved in transcription antitermination. Required for transcription of ribosomal RNA (rRNA) genes. Binds specifically to the boxA antiterminator sequence of the ribosomal RNA (rrn) operons. This Herpetosiphon aurantiacus (strain ATCC 23779 / DSM 785 / 114-95) protein is Transcription antitermination protein NusB.